Here is a 346-residue protein sequence, read N- to C-terminus: Insertion element IS476 uncharacterized 39.2 kDa protein (346 aa).

The segment at 1-50 (MVSARPAFISGGPSTGGWRPTRQAAERTGGPEHSIEEVAGRGAPGHRSAE) is disordered. A compositionally biased stretch (basic and acidic residues) spans 29–39 (GGPEHSIEEVA). An Integrase catalytic domain is found at 169 to 329 (ASSMPNDTWS…IPPAQFAANY (161 aa)).

The protein is Insertion element IS476 uncharacterized 39.2 kDa protein of Xanthomonas euvesicatoria.